A 297-amino-acid chain; its full sequence is Guanylate kinase (297 aa).

Residues 5–184 (GKVIIISGPS…AVSKITDILI (180 aa)) form the Guanylate kinase-like domain. 12–19 (GPSGVGKG) lines the ATP pocket. Positions 205 to 297 (ENIVDQKYTY…IKQRSDFSGD (93 aa)) are unknown.

It belongs to the guanylate kinase family.

The protein localises to the cytoplasm. The enzyme catalyses GMP + ATP = GDP + ADP. Its function is as follows. Essential for recycling GMP and indirectly, cGMP. The sequence is that of Guanylate kinase (gmk) from Mesoplasma florum (strain ATCC 33453 / NBRC 100688 / NCTC 11704 / L1) (Acholeplasma florum).